A 254-amino-acid polypeptide reads, in one-letter code: Acidic endochitinase (254 aa).

The N-terminal stretch at 1-23 (MKFWGSVLALSFVVFLFLTGTLA) is a signal peptide. Glu91 serves as the catalytic Proton donor. Cys213 and Cys245 are oxidised to a cystine.

The protein belongs to the glycosyl hydrolase 19 family. Chitinase class II subfamily.

It is found in the secreted. It carries out the reaction Random endo-hydrolysis of N-acetyl-beta-D-glucosaminide (1-&gt;4)-beta-linkages in chitin and chitodextrins.. Defense against chitin-containing fungal pathogens. The sequence is that of Acidic endochitinase from Petunia hybrida (Petunia).